An 84-amino-acid polypeptide reads, in one-letter code: Large ribosomal subunit protein bL27 (84 aa).

Residues 1 to 21 (MAHKKGGGSSKNGRDSQSKRL) form a disordered region.

The protein belongs to the bacterial ribosomal protein bL27 family.

The protein is Large ribosomal subunit protein bL27 of Brachyspira hyodysenteriae (strain ATCC 49526 / WA1).